Reading from the N-terminus, the 237-residue chain is 1-(5-phosphoribosyl)-5-[(5-phosphoribosylamino)methylideneamino] imidazole-4-carboxamide isomerase (237 aa).

The active-site Proton acceptor is the D8. The active-site Proton donor is the D128.

It belongs to the HisA/HisF family.

The protein localises to the cytoplasm. The catalysed reaction is 1-(5-phospho-beta-D-ribosyl)-5-[(5-phospho-beta-D-ribosylamino)methylideneamino]imidazole-4-carboxamide = 5-[(5-phospho-1-deoxy-D-ribulos-1-ylimino)methylamino]-1-(5-phospho-beta-D-ribosyl)imidazole-4-carboxamide. It participates in amino-acid biosynthesis; L-histidine biosynthesis; L-histidine from 5-phospho-alpha-D-ribose 1-diphosphate: step 4/9. The sequence is that of 1-(5-phosphoribosyl)-5-[(5-phosphoribosylamino)methylideneamino] imidazole-4-carboxamide isomerase from Gemmatimonas aurantiaca (strain DSM 14586 / JCM 11422 / NBRC 100505 / T-27).